A 517-amino-acid polypeptide reads, in one-letter code: Cytochrome P450 78A5 (517 aa).

Residues 20–40 (AFASVSLIIATVAFLLSPGGL) traverse the membrane as a helical segment. C459 serves as a coordination point for heme.

It belongs to the cytochrome P450 family. Requires heme as cofactor. Expressed in the periphery of the shoot apical meristem and inflorescence meristem, on the adaxial sides of developing floral organs and in developing ovules in the region where the integuments emerge.

Its subcellular location is the membrane. Plays a role in regulating directional growth at the meristem/organ boundary. Is required for the promotion of leaf and floral organ growth and for the prolongation of the plastochron. Promotes organ growth in a non-cell-autonomous manner and may generate a mobile growth signal distinct from the classical phytohormones that prevents premature arrest of proliferation, until the correct primordium size has been reached. Functions probably in association with CYP78A7 in regulating relative growth of the shoot apical meristem and plant organs. Is required locally in developing ovules to stimulates cell proliferation and promote seed growth. The sequence is that of Cytochrome P450 78A5 (CYP78A5) from Arabidopsis thaliana (Mouse-ear cress).